The primary structure comprises 56 residues: Calsequestrin-1 (56 aa).

Position 9 is a phosphotyrosine (tyrosine 9). Serine 47 carries the post-translational modification Phosphoserine.

It belongs to the calsequestrin family. In terms of assembly, monomer; increases in response to a depletion of intracellular calcium. Homodimer. Homotetramer and homopolymer. Can form linear homooligomers. Ca(2+) ions promote oligomerization. Interacts (via C-terminal end and preferentially with the monomeric form) with STIM1; this interaction increases in response to a depletion of intracellular calcium, decreases both STIM1 aggregation and clustering, interaction of STIM1 with ORAI1 and store-operated Ca(2+) entry (SOCE) activity. Interacts with ASPH and TRDN. N-glycosylated.

The protein localises to the endoplasmic reticulum. It is found in the sarcoplasmic reticulum. Its subcellular location is the sarcoplasmic reticulum lumen. The protein resides in the sarcoplasmic reticulum membrane. It localises to the mitochondrion matrix. Calsequestrin is a high-capacity, moderate affinity, calcium-binding protein and thus acts as an internal calcium store in muscle. Calcium ions are bound by clusters of acidic residues at the protein surface, often at the interface between subunits. Can bind around 80 Ca(2+) ions. Regulates the release of lumenal Ca(2+) via the calcium release channel RYR1; this plays an important role in triggering muscle contraction. Negatively regulates store-operated Ca(2+) entry (SOCE) activity. The protein is Calsequestrin-1 (CASQ1) of Canis lupus familiaris (Dog).